The chain runs to 145 residues: Chaperonin GroEL (145 aa).

Belongs to the chaperonin (HSP60) family. Forms a cylinder of 14 subunits composed of two heptameric rings stacked back-to-back. Interacts with the co-chaperonin GroES.

It localises to the cytoplasm. The catalysed reaction is ATP + H2O + a folded polypeptide = ADP + phosphate + an unfolded polypeptide.. Functionally, together with its co-chaperonin GroES, plays an essential role in assisting protein folding. The GroEL-GroES system forms a nano-cage that allows encapsulation of the non-native substrate proteins and provides a physical environment optimized to promote and accelerate protein folding. The polypeptide is Chaperonin GroEL (Thermus thermophilus).